Here is a 210-residue protein sequence, read N- to C-terminus: Large ribosomal subunit protein uL4 (210 aa).

Belongs to the universal ribosomal protein uL4 family. As to quaternary structure, part of the 50S ribosomal subunit.

Its function is as follows. One of the primary rRNA binding proteins, this protein initially binds near the 5'-end of the 23S rRNA. It is important during the early stages of 50S assembly. It makes multiple contacts with different domains of the 23S rRNA in the assembled 50S subunit and ribosome. Forms part of the polypeptide exit tunnel. In Thermus thermophilus, this protein is Large ribosomal subunit protein uL4 (rplD).